Consider the following 294-residue polypeptide: Aspartate carbamoyltransferase catalytic subunit (294 aa).

Residues R49 and T50 each contribute to the carbamoyl phosphate site. K77 lines the L-aspartate pocket. Carbamoyl phosphate-binding residues include R99, H127, and Q130. 2 residues coordinate L-aspartate: R161 and R211. Carbamoyl phosphate-binding residues include G250 and P251.

Belongs to the aspartate/ornithine carbamoyltransferase superfamily. ATCase family. As to quaternary structure, heterododecamer (2C3:3R2) of six catalytic PyrB chains organized as two trimers (C3), and six regulatory PyrI chains organized as three dimers (R2).

It catalyses the reaction carbamoyl phosphate + L-aspartate = N-carbamoyl-L-aspartate + phosphate + H(+). The protein operates within pyrimidine metabolism; UMP biosynthesis via de novo pathway; (S)-dihydroorotate from bicarbonate: step 2/3. Catalyzes the condensation of carbamoyl phosphate and aspartate to form carbamoyl aspartate and inorganic phosphate, the committed step in the de novo pyrimidine nucleotide biosynthesis pathway. This Sulfurovum sp. (strain NBC37-1) protein is Aspartate carbamoyltransferase catalytic subunit.